We begin with the raw amino-acid sequence, 209 residues long: MAVFKTLTDADIATFSTGLVAGVDEVGRGPLVGDVVTAAVILDPNRPIAGLNDSKKLSEKRREALFDEICEKALSYHVGRASPLEIDELNILHATMLAMQRAVAGLARAPELVLVDGNRSPAFTHQGLTLISHSIVKGDGLIASISAASIIAKVTRDREMDALDAAYPQYGFAKHKGYPTKAHFDAIAEHGVFDQYRKSFKPVKALLER.

The 192-residue stretch at 18–209 (GLVAGVDEVG…FKPVKALLER (192 aa)) folds into the RNase H type-2 domain. Residues aspartate 24, glutamate 25, and aspartate 116 each contribute to the a divalent metal cation site.

Belongs to the RNase HII family. Mn(2+) serves as cofactor. It depends on Mg(2+) as a cofactor.

The protein resides in the cytoplasm. The catalysed reaction is Endonucleolytic cleavage to 5'-phosphomonoester.. In terms of biological role, endonuclease that specifically degrades the RNA of RNA-DNA hybrids. The sequence is that of Ribonuclease HII from Shewanella sp. (strain ANA-3).